A 250-amino-acid chain; its full sequence is MTDILIDDTATEAVRTLIRAFPLVPVSQPPEQGSYLLAEHDTVSLRLVGEKSNVIVDFTSGAAQYRRTKGGGELIAKAVNHTAHPTVWDATAGLGRDSFVLASLGLTVTAFEQHPAVACLLSDGIRRALLNPETQDTAARINLHFGNAAEQMPALVKTQGKPDIVYLDPMYPERRKSAAVKKEMAYFHRLVGEAQDEVVLLHTARQTAKKRVVVKRPRLGEHLAGQAPAYQYTGKSTRFDVYLPYGADKG.

S-adenosyl-L-methionine is bound by residues 96 to 97 (RD) and Asp168.

The protein belongs to the methyltransferase superfamily. RsmJ family.

Its subcellular location is the cytoplasm. It catalyses the reaction guanosine(1516) in 16S rRNA + S-adenosyl-L-methionine = N(2)-methylguanosine(1516) in 16S rRNA + S-adenosyl-L-homocysteine + H(+). In terms of biological role, specifically methylates the guanosine in position 1516 of 16S rRNA. This Neisseria gonorrhoeae (strain ATCC 700825 / FA 1090) protein is Ribosomal RNA small subunit methyltransferase J.